A 320-amino-acid polypeptide reads, in one-letter code: MSELFWFEKYRPRSFDEVVDLEEVKSRLREFVKSGNMPHLLFYGPPGTGKTTMALVLARELYGEYWRENTLELNASDERGINVIRERVKEFARTAPVGKAPFKLVILDEADNMTSDAQQALRRIMEIYAQNTRFILLANYISGIIEPIQSRVVMIRFNPLPKEAVISRLRYIAENEGVKISDDALETIYEFTQGDMRKAINALQIAAATEKEITEDVVARALGMVSPRLLRETLQEALKGNFSKAMTQIYGFVVDGGVGELEIIRQIHREVLRLDVPEYVKPELAYIIAEAHYATLRGARGLTQIFGALAKIRRLLKQAV.

44–51 (GPPGTGKT) is a binding site for ATP.

It belongs to the activator 1 small subunits family. RfcS subfamily. In terms of assembly, heteromultimer composed of small subunits (RfcS) and large subunits (RfcL).

Functionally, part of the RFC clamp loader complex which loads the PCNA sliding clamp onto DNA. This chain is Replication factor C small subunit 2, found in Pyrobaculum islandicum (strain DSM 4184 / JCM 9189 / GEO3).